The chain runs to 895 residues: AP-1 complex subunit gamma (895 aa).

HEAT repeat units lie at residues 130–166, 167–205, 211–256, 301–339, and 341–376; these read TAMA…LRKV, PDLT…MDST, KKMV…ILGQ, NGLK…TDIQ, and VQRH…ESNI. Disordered stretches follow at residues 591 to 687, 706 to 733, and 746 to 770; these read KQEE…MNNM, NNNS…NNKS, and QLTP…QTSV. 5 stretches are compositionally biased toward low complexity: residues 604-626, 639-658, 675-687, 706-731, and 746-765; these read PTQT…QSSQ, QSSA…GGNA, NGNM…MNNM, NNNS…NNNN, and QLTP…LSPT. Residues 775–893 enclose the GAE domain; sequence PQPLTFLVYQ…SDVPDTPLPS (119 aa).

The protein belongs to the adaptor complexes large subunit family. As to quaternary structure, adaptor protein complex 1 (AP-1) is a heterotetramer composed of two large adaptins (gamma-type subunit and beta-type subunit), a medium adaptin (mu-type subunit) and a small adaptin (sigma-type subunit). Interacts with rhgA.

The protein resides in the golgi apparatus. It localises to the trans-Golgi network. Its subcellular location is the cytoplasmic vesicle. The protein localises to the clathrin-coated vesicle membrane. Functionally, subunit of clathrin-associated adaptor protein complex 1 that plays a role in protein sorting in the trans-Golgi network (TGN) and endosomes. The AP complexes mediate the recruitment of clathrin to membranes and the recognition of sorting signals within the cytosolic tails of transmembrane cargo molecules. Also involved in early steps of phagocytosis and macropinocytosis. This is AP-1 complex subunit gamma (ap1g1) from Dictyostelium discoideum (Social amoeba).